Reading from the N-terminus, the 126-residue chain is Protein ApaG (126 aa).

An ApaG domain is found at 2–126 (SDPRYQIDVS…FRLAVPGALH (125 aa)).

The chain is Protein ApaG from Pseudomonas putida (strain ATCC 700007 / DSM 6899 / JCM 31910 / BCRC 17059 / LMG 24140 / F1).